Reading from the N-terminus, the 311-residue chain is Pyrimidine-specific ribonucleoside hydrolase RihA (311 aa).

Residue H240 is part of the active site.

It belongs to the IUNH family. RihA subfamily.

Functionally, hydrolyzes with equal efficiency cytidine or uridine to ribose and cytosine or uracil, respectively. This is Pyrimidine-specific ribonucleoside hydrolase RihA from Escherichia coli (strain ATCC 8739 / DSM 1576 / NBRC 3972 / NCIMB 8545 / WDCM 00012 / Crooks).